Consider the following 207-residue polypeptide: Ribosomal RNA small subunit methyltransferase G (207 aa).

Residues G73, L78, 124–125 (VE), and R139 each bind S-adenosyl-L-methionine.

It belongs to the methyltransferase superfamily. RNA methyltransferase RsmG family.

It is found in the cytoplasm. It carries out the reaction guanosine(527) in 16S rRNA + S-adenosyl-L-methionine = N(7)-methylguanosine(527) in 16S rRNA + S-adenosyl-L-homocysteine. In terms of biological role, specifically methylates the N7 position of guanine in position 527 of 16S rRNA. In Salmonella schwarzengrund (strain CVM19633), this protein is Ribosomal RNA small subunit methyltransferase G.